A 112-amino-acid chain; its full sequence is Cytochrome c-551 (112 aa).

The signal sequence occupies residues 1-20 (MKSKLSILMIGFALSVLLAA). The N-palmitoyl cysteine moiety is linked to residue C21. C21 carries the S-diacylglycerol cysteine lipid modification. A compositionally biased stretch (basic and acidic residues) spans 25 to 35 (DAKEEKTDTGS). The disordered stretch occupies residues 25–44 (DAKEEKTDTGSKTEATASEG). A Cytochrome c domain is found at 39–112 (ATASEGEELY…VIAKWLSEKK (74 aa)). C52, C55, H56, and M91 together coordinate heme c.

In terms of processing, binds 1 heme c group covalently per subunit.

The protein resides in the cell membrane. Electron carrier protein. The chain is Cytochrome c-551 (cccB) from Bacillus subtilis (strain 168).